Reading from the N-terminus, the 646-residue chain is Type I inositol polyphosphate 5-phosphatase 2 (646 aa).

A compositionally biased stretch (basic and acidic residues) spans 59–74 (TDEDSHNGRRGSEADH). Disordered regions lie at residues 59–99 (TDED…GKSE), 185–207 (ESVY…SAPS), and 329–369 (IDNR…IRNS). Positions 188 to 207 (YDQSPSCNNNALHRSHSAPS) are enriched in polar residues. A compositionally biased stretch (basic and acidic residues) spans 341 to 350 (EAAKIMHDDS). Catalytic regions lie at residues 495-510 (DQVF…LNMS) and 575-590 (KKRA…WLGK).

It belongs to the inositol polyphosphate 5-phosphatase family. In terms of tissue distribution, expressed ubiquitously.

It carries out the reaction 1D-myo-inositol 1,4,5-trisphosphate + H2O = 1D-myo-inositol 1,4-bisphosphate + phosphate. The catalysed reaction is 1D-myo-inositol 1,3,4,5-tetrakisphosphate + H2O = 1D-myo-inositol 1,3,4-trisphosphate + phosphate. Its function is as follows. Has phosphatase activity toward Ins(1,4,5)P3 and Ins(1,3,4,5)P4. Seems to be involved in the abscisic acid (ABA) signaling pathway. Could also be able to hydrolyze PtdIns(4,5)P2 and PtdIns(3,4,5)P3. This is Type I inositol polyphosphate 5-phosphatase 2 from Arabidopsis thaliana (Mouse-ear cress).